A 45-amino-acid polypeptide reads, in one-letter code: Pseudo-hevein (45 aa).

The Chitin-binding type-1 domain occupies glutamate 1–glycine 43. 4 disulfide bridges follow: cysteine 3/cysteine 18, cysteine 12/cysteine 24, cysteine 17/cysteine 31, and cysteine 37/cysteine 41.

Its function is as follows. N-acetyl-D-glucosamine / N-acetyl-D-neuraminic acid binding lectin. Can inhibit fungal growth. This Hevea brasiliensis (Para rubber tree) protein is Pseudo-hevein.